Consider the following 256-residue polypeptide: Small ribosomal subunit protein eS1A (256 aa).

A2 is subject to N-acetylalanine; partial.

It belongs to the eukaryotic ribosomal protein eS1 family. In terms of assembly, component of the small ribosomal subunit. Mature ribosomes consist of a small (40S) and a large (60S) subunit. The 40S subunit contains about 33 different proteins and 1 molecule of RNA (18S). The 60S subunit contains about 49 different proteins and 3 molecules of RNA (25S, 5.8S and 5S).

It is found in the cytoplasm. This chain is Small ribosomal subunit protein eS1A, found in Clavispora lusitaniae (strain ATCC 42720) (Yeast).